The primary structure comprises 535 residues: CTP synthase (535 aa).

The amidoligase domain stretch occupies residues M1–L267. S13 provides a ligand contact to CTP. S13 contacts UTP. Position 14-19 (S14–I19) interacts with ATP. Y54 lines the L-glutamine pocket. Position 71 (D71) interacts with ATP. Residues D71 and E141 each contribute to the Mg(2+) site. Residues D148 to E150, K188 to Q193, and K224 each bind CTP. Residues K188 to Q193 and K224 contribute to the UTP site. R240–A242 contacts ATP. The Glutamine amidotransferase type-1 domain maps to K292 to S534. G354 contributes to the L-glutamine binding site. The active-site Nucleophile; for glutamine hydrolysis is C381. Residues L382 to Q385, E405, and R462 contribute to the L-glutamine site. Active-site residues include H507 and E509.

The protein belongs to the CTP synthase family. In terms of assembly, homotetramer.

The enzyme catalyses UTP + L-glutamine + ATP + H2O = CTP + L-glutamate + ADP + phosphate + 2 H(+). The catalysed reaction is L-glutamine + H2O = L-glutamate + NH4(+). It catalyses the reaction UTP + NH4(+) + ATP = CTP + ADP + phosphate + 2 H(+). The protein operates within pyrimidine metabolism; CTP biosynthesis via de novo pathway; CTP from UDP: step 2/2. Allosterically activated by GTP, when glutamine is the substrate; GTP has no effect on the reaction when ammonia is the substrate. The allosteric effector GTP functions by stabilizing the protein conformation that binds the tetrahedral intermediate(s) formed during glutamine hydrolysis. Inhibited by the product CTP, via allosteric rather than competitive inhibition. In terms of biological role, catalyzes the ATP-dependent amination of UTP to CTP with either L-glutamine or ammonia as the source of nitrogen. Regulates intracellular CTP levels through interactions with the four ribonucleotide triphosphates. The protein is CTP synthase of Bacillus cereus (strain G9842).